The sequence spans 239 residues: tRNA (guanine-N(1)-)-methyltransferase (239 aa).

S-adenosyl-L-methionine contacts are provided by residues G109 and 128–133; that span reads IGDYVL.

The protein belongs to the RNA methyltransferase TrmD family. In terms of assembly, homodimer.

The protein localises to the cytoplasm. The enzyme catalyses guanosine(37) in tRNA + S-adenosyl-L-methionine = N(1)-methylguanosine(37) in tRNA + S-adenosyl-L-homocysteine + H(+). Functionally, specifically methylates guanosine-37 in various tRNAs. The sequence is that of tRNA (guanine-N(1)-)-methyltransferase from Thermus thermophilus (strain ATCC 27634 / DSM 579 / HB8).